Consider the following 382-residue polypeptide: Lipid-A-disaccharide synthase (382 aa).

It belongs to the LpxB family.

It catalyses the reaction 2-N,3-O-bis[(3R)-3-hydroxytetradecanoyl]-alpha-D-glucosaminyl 1-phosphate + UDP-2-N,3-O-bis[(3R)-3-hydroxytetradecanoyl]-alpha-D-glucosamine = lipid A disaccharide (E. coli) + UDP + H(+). The catalysed reaction is a lipid X + a UDP-2-N,3-O-bis[(3R)-3-hydroxyacyl]-alpha-D-glucosamine = a lipid A disaccharide + UDP + H(+). It functions in the pathway glycolipid biosynthesis; lipid IV(A) biosynthesis; lipid IV(A) from (3R)-3-hydroxytetradecanoyl-[acyl-carrier-protein] and UDP-N-acetyl-alpha-D-glucosamine: step 5/6. Its function is as follows. Condensation of UDP-2,3-diacylglucosamine and 2,3-diacylglucosamine-1-phosphate to form lipid A disaccharide, a precursor of lipid A, a phosphorylated glycolipid that anchors the lipopolysaccharide to the outer membrane of the cell. This Escherichia coli O8 (strain IAI1) protein is Lipid-A-disaccharide synthase.